The sequence spans 256 residues: uncharacterized protein (256 aa).

8 residues coordinate NADP(+): isoleucine 18, serine 37, lysine 46, aspartate 66, tyrosine 164, lysine 168, valine 197, and threonine 199. The Proton donor role is filled by tyrosine 164. Lysine 168 serves as the catalytic Lowers pKa of active site Tyr.

The protein belongs to the short-chain dehydrogenases/reductases (SDR) family.

It is found in the cytoplasm. This is an uncharacterized protein from Saccharomyces cerevisiae (strain ATCC 204508 / S288c) (Baker's yeast).